A 109-amino-acid polypeptide reads, in one-letter code: Nucleoid-associated protein Sama_1311 (109 aa).

It belongs to the YbaB/EbfC family. In terms of assembly, homodimer.

It is found in the cytoplasm. The protein resides in the nucleoid. In terms of biological role, binds to DNA and alters its conformation. May be involved in regulation of gene expression, nucleoid organization and DNA protection. The polypeptide is Nucleoid-associated protein Sama_1311 (Shewanella amazonensis (strain ATCC BAA-1098 / SB2B)).